The chain runs to 445 residues: Chromosome partition protein MukF (445 aa).

Positions leucine 213 to isoleucine 241 are leucine-zipper.

The protein belongs to the MukF family. Interacts, and probably forms a ternary complex, with MukE and MukB via its C-terminal region. The complex formation is stimulated by calcium or magnesium. It is required for an interaction between MukE and MukB.

It is found in the cytoplasm. The protein localises to the nucleoid. Its function is as follows. Involved in chromosome condensation, segregation and cell cycle progression. May participate in facilitating chromosome segregation by condensation DNA from both sides of a centrally located replisome during cell division. Not required for mini-F plasmid partitioning. Probably acts via its interaction with MukB and MukE. Overexpression results in anucleate cells. It has a calcium binding activity. This Vibrio parahaemolyticus serotype O3:K6 (strain RIMD 2210633) protein is Chromosome partition protein MukF.